The chain runs to 396 residues: S-adenosylmethionine synthase 3 (396 aa).

Residue glutamate 13 coordinates Mg(2+). Histidine 19 contacts ATP. Glutamate 47 provides a ligand contact to K(+). Residues glutamate 60 and glutamine 103 each coordinate L-methionine. Residues 171-173 (DGK), 239-242 (SGRF), aspartate 250, 256-257 (RK), alanine 273, lysine 277, and lysine 281 each bind ATP. Position 250 (aspartate 250) interacts with L-methionine. Lysine 281 contacts L-methionine.

Belongs to the AdoMet synthase family. In terms of assembly, homotetramer. It depends on Mn(2+) as a cofactor. Mg(2+) is required as a cofactor. Co(2+) serves as cofactor. Requires K(+) as cofactor. In terms of tissue distribution, expressed in roots, stems and leaves (at protein level).

It is found in the cytoplasm. The catalysed reaction is L-methionine + ATP + H2O = S-adenosyl-L-methionine + phosphate + diphosphate. It participates in amino-acid biosynthesis; S-adenosyl-L-methionine biosynthesis; S-adenosyl-L-methionine from L-methionine: step 1/1. Functionally, catalyzes the formation of S-adenosylmethionine from methionine and ATP. The reaction comprises two steps that are both catalyzed by the same enzyme: formation of S-adenosylmethionine (AdoMet) and triphosphate, and subsequent hydrolysis of the triphosphate. May be involved in the synthesis of betain in response to abiotic stress such as high salinity. The polypeptide is S-adenosylmethionine synthase 3 (SAMS3) (Atriplex nummularia (Old man saltbush)).